Here is a 280-residue protein sequence, read N- to C-terminus: Large ribosomal subunit protein uL2 (280 aa).

Residues 223 to 280 (VVMNPVDHPHGGGEGRTSGGRHPVTPWGKPTKGARTRNKNKASSKLIIRSRHAKKKGR) form a disordered region. Positions 254–280 (KGARTRNKNKASSKLIIRSRHAKKKGR) are enriched in basic residues.

Belongs to the universal ribosomal protein uL2 family. As to quaternary structure, part of the 50S ribosomal subunit. Forms a bridge to the 30S subunit in the 70S ribosome.

Its function is as follows. One of the primary rRNA binding proteins. Required for association of the 30S and 50S subunits to form the 70S ribosome, for tRNA binding and peptide bond formation. It has been suggested to have peptidyltransferase activity; this is somewhat controversial. Makes several contacts with the 16S rRNA in the 70S ribosome. In Dinoroseobacter shibae (strain DSM 16493 / NCIMB 14021 / DFL 12), this protein is Large ribosomal subunit protein uL2.